We begin with the raw amino-acid sequence, 258 residues long: SufE-like protein 2, chloroplastic (258 aa).

Residues Met1–Thr32 are disordered. Over residues Leu15–Thr32 the composition is skewed to polar residues. The Cysteine persulfide intermediate role is filled by Cys122.

It belongs to the SufE family. In terms of tissue distribution, highly expressed in flowers and pollen, and at low levels in roots, leaves and stems.

Its subcellular location is the plastid. The protein localises to the chloroplast. It functions in the pathway cofactor biosynthesis; iron-sulfur cluster biosynthesis. Its function is as follows. Participates in cysteine desulfurization mediated by NFS2. Can activate the cysteine desulfurase activity of NFS2 in vitro. Cysteine desulfurization mobilizes sulfur from L-cysteine to yield L-alanine and supplies the inorganic sulfur for iron-sulfur (Fe-S) cluster formation. The polypeptide is SufE-like protein 2, chloroplastic (SUFE2) (Arabidopsis thaliana (Mouse-ear cress)).